The sequence spans 428 residues: Enolase (428 aa).

Position 162 (Gln-162) interacts with (2R)-2-phosphoglycerate. Glu-204 (proton donor) is an active-site residue. Residues Asp-241, Glu-283, and Asp-310 each contribute to the Mg(2+) site. (2R)-2-phosphoglycerate-binding residues include Lys-335, Arg-364, Ser-365, and Lys-386. The active-site Proton acceptor is the Lys-335.

This sequence belongs to the enolase family. It depends on Mg(2+) as a cofactor.

It localises to the cytoplasm. The protein localises to the secreted. The protein resides in the cell surface. It carries out the reaction (2R)-2-phosphoglycerate = phosphoenolpyruvate + H2O. It participates in carbohydrate degradation; glycolysis; pyruvate from D-glyceraldehyde 3-phosphate: step 4/5. In terms of biological role, catalyzes the reversible conversion of 2-phosphoglycerate (2-PG) into phosphoenolpyruvate (PEP). It is essential for the degradation of carbohydrates via glycolysis. The chain is Enolase from Rhodococcus opacus (strain B4).